Here is a 129-residue protein sequence, read N- to C-terminus: Sulfurtransferase TusD (129 aa).

C79 functions as the Cysteine persulfide intermediate in the catalytic mechanism.

The protein belongs to the DsrE/TusD family. As to quaternary structure, heterohexamer, formed by a dimer of trimers. The hexameric TusBCD complex contains 2 copies each of TusB, TusC and TusD. The TusBCD complex interacts with TusE.

Its subcellular location is the cytoplasm. Functionally, part of a sulfur-relay system required for 2-thiolation of 5-methylaminomethyl-2-thiouridine (mnm(5)s(2)U) at tRNA wobble positions. Accepts sulfur from TusA and transfers it in turn to TusE. This chain is Sulfurtransferase TusD, found in Serratia proteamaculans (strain 568).